The chain runs to 442 residues: tRNA modification GTPase MnmE (442 aa).

The (6S)-5-formyl-5,6,7,8-tetrahydrofolate site is built by Arg-24, Glu-82, and Lys-122. In terms of domain architecture, TrmE-type G spans 219-366 (GFKVALVGEP…LRRALKREIE (148 aa)). Residue Asn-229 coordinates K(+). GTP contacts are provided by residues 229-234 (NAGKST), 248-254 (TDIAGTT), and 273-276 (DTAG). Residue Ser-233 coordinates Mg(2+). K(+) contacts are provided by Thr-248, Ile-250, and Thr-253. Thr-254 lines the Mg(2+) pocket. Lys-442 contacts (6S)-5-formyl-5,6,7,8-tetrahydrofolate.

The protein belongs to the TRAFAC class TrmE-Era-EngA-EngB-Septin-like GTPase superfamily. TrmE GTPase family. Homodimer. Heterotetramer of two MnmE and two MnmG subunits. The cofactor is K(+).

It localises to the cytoplasm. In terms of biological role, exhibits a very high intrinsic GTPase hydrolysis rate. Involved in the addition of a carboxymethylaminomethyl (cmnm) group at the wobble position (U34) of certain tRNAs, forming tRNA-cmnm(5)s(2)U34. The polypeptide is tRNA modification GTPase MnmE (Agrobacterium fabrum (strain C58 / ATCC 33970) (Agrobacterium tumefaciens (strain C58))).